Reading from the N-terminus, the 273-residue chain is MSTFNSNFKLGTYLTQVRQENPLVHAITNYVTMNDCANITLAAGASPAMCESRDEVSDFVPLAKALYINIGTINQEHKDSIYLAAEKASELEIPIVLDPVGAVAIKSRLDLVKDLLTNYNVSCIKGNNAEIKCLAGRKGHGKGMDSLDLGEDIQMVNSELSEKYNTMVLATGKTDLITKGNITVKVSNGTPLLGRITGSGCMLGILISAFIGASDNDWEAGIAATVSMGVVGEMAEESISSSTDLGSFRVKIFDHMAALTSKELQERGNVSEL.

Substrate is bound at residue M49. Residues K125 and T171 each contribute to the ATP site. G198 lines the substrate pocket.

This sequence belongs to the Thz kinase family. Mg(2+) is required as a cofactor.

It catalyses the reaction 5-(2-hydroxyethyl)-4-methylthiazole + ATP = 4-methyl-5-(2-phosphooxyethyl)-thiazole + ADP + H(+). It participates in cofactor biosynthesis; thiamine diphosphate biosynthesis; 4-methyl-5-(2-phosphoethyl)-thiazole from 5-(2-hydroxyethyl)-4-methylthiazole: step 1/1. Functionally, catalyzes the phosphorylation of the hydroxyl group of 4-methyl-5-beta-hydroxyethylthiazole (THZ). In Natranaerobius thermophilus (strain ATCC BAA-1301 / DSM 18059 / JW/NM-WN-LF), this protein is Hydroxyethylthiazole kinase.